A 295-amino-acid chain; its full sequence is Cell shape-determining protein MreC (295 aa).

An N-terminal signal peptide occupies residues 1 to 34 (MPQFFLNKRLIILLISIIVLVALVGFSLRDRENA). A coiled-coil region spans residues 66–112 (VVDLKNTYTENQHLKERLEELAQLESEVADLKKENKDLKESLDITDS). The interval 276–295 (SAEAGTTDDDTTSSDTTGGQ) is disordered.

This sequence belongs to the MreC family. Homooligomer of 24 subunits, arranged as 12 dimers.

Functionally, involved in formation and maintenance of cell shape. This is Cell shape-determining protein MreC from Listeria monocytogenes serovar 1/2a (strain ATCC BAA-679 / EGD-e).